The following is a 210-amino-acid chain: Outer-membrane lipoprotein LolB (210 aa).

A signal peptide spans Met1–Gly29. Residue Cys30 is the site of N-palmitoyl cysteine attachment. The S-diacylglycerol cysteine moiety is linked to residue Cys30.

It belongs to the LolB family. In terms of assembly, monomer.

The protein localises to the cell outer membrane. Functionally, plays a critical role in the incorporation of lipoproteins in the outer membrane after they are released by the LolA protein. The polypeptide is Outer-membrane lipoprotein LolB (Coxiella burnetii (strain CbuG_Q212) (Coxiella burnetii (strain Q212))).